Consider the following 893-residue polypeptide: Nitrate reductase [NADPH] (893 aa).

The disordered stretch occupies residues 1–83 (MSVTTQQPAV…KPTPDAHVPR (83 aa)). Pro residues predominate over residues 55-65 (PDFPLPPPANP). The segment covering 71–83 (DIDKPTPDAHVPR) has biased composition (basic and acidic residues). Residue C170 coordinates Mo-molybdopterin. The 76-residue stretch at 536-611 (NRIVELDELK…MPAYHIGTLS (76 aa)) folds into the Cytochrome b5 heme-binding domain. Heme contacts are provided by H571 and H594. Residues 641–752 (RTWSKALLSS…KGPIGKFEYL (112 aa)) form the FAD-binding FR-type domain. FAD contacts are provided by residues 695–698 (RSYT), 712–716 (LIKIY), 726–728 (KMT), S776, and T779. 863 to 872 (LVLVCGPEGL) contributes to the NADP(+) binding site.

The protein belongs to the nitrate reductase family. As to quaternary structure, homodimer. The cofactor is FAD. Requires heme as cofactor. It depends on Mo-molybdopterin as a cofactor.

The enzyme catalyses nitrite + NADP(+) + H2O = nitrate + NADPH + H(+). In terms of biological role, nitrate reductase is a key enzyme involved in the first step of nitrate assimilation in plants, fungi and bacteria. The chain is Nitrate reductase [NADPH] (NIAD) from Leptosphaeria maculans (Blackleg fungus).